A 221-amino-acid polypeptide reads, in one-letter code: Vesicle transport v-SNARE 13 (221 aa).

The Cytoplasmic segment spans residues 1-198 (MSQGFERYER…MTRRMNRNKW (198 aa)). Positions 32–93 (EQKKQNLSEI…FKTEVKRITS (62 aa)) form a coiled coil. A helical; Anchor for type IV membrane protein transmembrane segment spans residues 199-219 (TIGAIITVLVLAIIFILYFKL). Topologically, residues 220 to 221 (TR) are vesicular.

This sequence belongs to the VTI1 family. In terms of assembly, forms SNARE complexes with t-SNAREs. As to expression, expressed at low levels in roots, stems, flowers and leaves.

The protein localises to the vacuole membrane. It is found in the prevacuolar compartment membrane. Its subcellular location is the endosome membrane. The protein resides in the early endosome membrane. In terms of biological role, may function as a v-SNARE responsible for targeting vesicles involved in the secretory pathway. Involved in actin-dependent endosomal trafficking pathways associated with the vacuole within root hairs and root tip epidermal cells. Essential for cell wall organization and polarized root hair growth. Also required for the localization of SYP41 to the trans-Golgi network in root hair cells. The chain is Vesicle transport v-SNARE 13 from Arabidopsis thaliana (Mouse-ear cress).